The chain runs to 187 residues: UPF0340 protein SPT_0687 (187 aa).

Belongs to the UPF0340 family.

The polypeptide is UPF0340 protein SPT_0687 (Streptococcus pneumoniae (strain Taiwan19F-14)).